Reading from the N-terminus, the 912-residue chain is Serine/threonine-protein kinase D1 (912 aa).

Position 95 is a phosphotyrosine (Tyr95). Residues 146–196 form a Phorbol-ester/DAG-type 1 zinc finger; sequence PHALFVHSYRAPAFCDHCGEMLWGLVRQGLKCEGCGLNYHKRCAFKIPNNC. Phosphoserine is present on residues Ser205, Ser208, Ser219, and Ser223. The Phorbol-ester/DAG-type 2 zinc finger occupies 270–320; the sequence is PHTFVIHSYTRPTVCQYCKKLLKGLFRQGLQCKDCRFNCHKRCAPKVPNNC. Ser345 bears the Phosphoserine mark. The interval 377-402 is disordered; sequence NDSGEMQDPDPDHEDANRTISPSTSN. 2 positions are modified to phosphoserine; by MAPK13: Ser397 and Ser401. The PH domain occupies 422–541; sequence TVMKEGWMVH…WEIAIQHALM (120 aa). Tyr432 is modified (phosphotyrosine). Ser448 is modified (phosphoserine). Tyr463 carries the post-translational modification Phosphotyrosine; by ABL. A Phosphoserine modification is found at Ser473. At Tyr502 the chain carries Phosphotyrosine. Phosphoserine is present on Ser548. A Protein kinase domain is found at 583-839; the sequence is IFPDEVLGSG…VDKTLSHPWL (257 aa). ATP is bound by residues 589–597 and Lys612; that span reads LGSGQFGIV. The active-site Proton acceptor is Asp706. Residue Ser738 is modified to Phosphoserine; by PKC/PRKCD. Ser742 is modified (phosphoserine; by autocatalysis and PKC/PRKCD). Position 749 is a phosphotyrosine (Tyr749). Ser910 is modified (phosphoserine; by autocatalysis).

It belongs to the protein kinase superfamily. CAMK Ser/Thr protein kinase family. PKD subfamily. As to quaternary structure, interacts (via N-terminus) with ADAP1/CENTA1. Interacts with MAPK13. Interacts with DAPK1 in an oxidative stress-regulated manner. Interacts with USP28; the interaction induces phosphorylation of USP28 and activated KRAS-mediated stabilization of ZNF304. Interacts with AKAP13 (via C-terminal domain). Requires Mg(2+) as cofactor. In terms of processing, phosphorylated at Ser-397 and Ser-401 by MAPK13 during regulation of insulin secretion in pancreatic beta cells. Phosphorylated by DAPK1. Phosphorylated at Tyr-95 and by ABL at Tyr-463, which primes the kinase in response to oxidative stress, and promotes a second step activating phosphorylation at Ser-738/Ser-742 by PKRD. Phosphorylated on Ser-910 upon S.enterica infection in macrophages.

The protein resides in the cytoplasm. The protein localises to the cell membrane. It localises to the golgi apparatus. It is found in the trans-Golgi network. It catalyses the reaction L-seryl-[protein] + ATP = O-phospho-L-seryl-[protein] + ADP + H(+). It carries out the reaction L-threonyl-[protein] + ATP = O-phospho-L-threonyl-[protein] + ADP + H(+). With respect to regulation, activated by DAG and phorbol esters. Phorbol-ester/DAG-type domain 1 binds DAG with high affinity and appears to play the dominant role in mediating translocation to the cell membrane and trans-Golgi network. Phorbol-ester/DAG-type domain 2 binds phorbol ester with higher affinity. Autophosphorylation of Ser-742 and phosphorylation of Ser-738 by PKC relieves auto-inhibition by the PH domain. Phosphorylation on Tyr-463 by the SRC-ABL1 pathway in response to oxidative stress, is also required for activation. Activated by DAPK1 under oxidative stress. Its function is as follows. Serine/threonine-protein kinase that converts transient diacylglycerol (DAG) signals into prolonged physiological effects downstream of PKC, and is involved in the regulation of MAPK8/JNK1 and Ras signaling, Golgi membrane integrity and trafficking, cell survival through NF-kappa-B activation, cell migration, cell differentiation by mediating HDAC7 nuclear export, cell proliferation via MAPK1/3 (ERK1/2) signaling, and plays a role in cardiac hypertrophy, VEGFA-induced angiogenesis, genotoxic-induced apoptosis and flagellin-stimulated inflammatory response. Phosphorylates the epidermal growth factor receptor (EGFR) on dual threonine residues, which leads to the suppression of epidermal growth factor (EGF)-induced MAPK8/JNK1 activation and subsequent JUN phosphorylation. Phosphorylates RIN1, inducing RIN1 binding to 14-3-3 proteins YWHAB, YWHAE and YWHAZ and increased competition with RAF1 for binding to GTP-bound form of Ras proteins (NRAS, HRAS and KRAS). Acts downstream of the heterotrimeric G-protein beta/gamma-subunit complex to maintain the structural integrity of the Golgi membranes, and is required for protein transport along the secretory pathway. In the trans-Golgi network (TGN), regulates the fission of transport vesicles that are on their way to the plasma membrane. May act by activating the lipid kinase phosphatidylinositol 4-kinase beta (PI4KB) at the TGN for the local synthesis of phosphorylated inositol lipids, which induces a sequential production of DAG, phosphatidic acid (PA) and lyso-PA (LPA) that are necessary for membrane fission and generation of specific transport carriers to the cell surface. Under oxidative stress, is phosphorylated at Tyr-463 via SRC-ABL1 and contributes to cell survival by activating IKK complex and subsequent nuclear translocation and activation of NFKB1. Involved in cell migration by regulating integrin alpha-5/beta-3 recycling and promoting its recruitment in newly forming focal adhesion. In osteoblast differentiation, mediates the bone morphogenetic protein 2 (BMP2)-induced nuclear export of HDAC7, which results in the inhibition of HDAC7 transcriptional repression of RUNX2. In neurons, plays an important role in neuronal polarity by regulating the biogenesis of TGN-derived dendritic vesicles, and is involved in the maintenance of dendritic arborization and Golgi structure in hippocampal cells. May potentiate mitogenesis induced by the neuropeptide bombesin or vasopressin by mediating an increase in the duration of MAPK1/3 (ERK1/2) signaling, which leads to accumulation of immediate-early gene products including FOS that stimulate cell cycle progression. Plays an important role in the proliferative response induced by low calcium in keratinocytes, through sustained activation of MAPK1/3 (ERK1/2) pathway. Downstream of novel PKC signaling, plays a role in cardiac hypertrophy by phosphorylating HDAC5, which in turn triggers XPO1/CRM1-dependent nuclear export of HDAC5, MEF2A transcriptional activation and induction of downstream target genes that promote myocyte hypertrophy and pathological cardiac remodeling. Mediates cardiac troponin I (TNNI3) phosphorylation at the PKA sites, which results in reduced myofilament calcium sensitivity, and accelerated crossbridge cycling kinetics. The PRKD1-HDAC5 pathway is also involved in angiogenesis by mediating VEGFA-induced specific subset of gene expression, cell migration, and tube formation. In response to VEGFA, is necessary and required for HDAC7 phosphorylation which induces HDAC7 nuclear export and endothelial cell proliferation and migration. During apoptosis induced by cytarabine and other genotoxic agents, PRKD1 is cleaved by caspase-3 at Asp-378, resulting in activation of its kinase function and increased sensitivity of cells to the cytotoxic effects of genotoxic agents. In epithelial cells, is required for transducing flagellin-stimulated inflammatory responses by binding and phosphorylating TLR5, which contributes to MAPK14/p38 activation and production of inflammatory cytokines. Acts as an activator of NLRP3 inflammasome assembly by mediating phosphorylation of NLRP3. May play a role in inflammatory response by mediating activation of NF-kappa-B. May be involved in pain transmission by directly modulating TRPV1 receptor. Plays a role in activated KRAS-mediated stabilization of ZNF304 in colorectal cancer (CRC) cells. Regulates nuclear translocation of transcription factor TFEB in macrophages upon live S.enterica infection. This is Serine/threonine-protein kinase D1 (PRKD1) from Homo sapiens (Human).